We begin with the raw amino-acid sequence, 116 residues long: Ribosome-binding factor A (116 aa).

Belongs to the RbfA family. In terms of assembly, monomer. Binds 30S ribosomal subunits, but not 50S ribosomal subunits or 70S ribosomes.

The protein localises to the cytoplasm. Functionally, one of several proteins that assist in the late maturation steps of the functional core of the 30S ribosomal subunit. Associates with free 30S ribosomal subunits (but not with 30S subunits that are part of 70S ribosomes or polysomes). Required for efficient processing of 16S rRNA. May interact with the 5'-terminal helix region of 16S rRNA. This is Ribosome-binding factor A from Staphylococcus epidermidis (strain ATCC 35984 / DSM 28319 / BCRC 17069 / CCUG 31568 / BM 3577 / RP62A).